We begin with the raw amino-acid sequence, 160 residues long: Keratin-associated protein 13-4 (160 aa).

4 repeat units span residues 41–50 (CQLRSSLYRD), 51–60 (CQKTCWEPAS), 61–70 (CQKSCYRPRT), and 77–86 (CQTTCSGSLG). The 4 X 10 AA approximate repeats stretch occupies residues 41 to 86 (CQLRSSLYRDCQKTCWEPASCQKSCYRPRTSILCCPCQTTCSGSLG).

It belongs to the PMG family. Interacts with hair keratins.

In terms of biological role, in the hair cortex, hair keratin intermediate filaments are embedded in an interfilamentous matrix, consisting of hair keratin-associated proteins (KRTAP), which are essential for the formation of a rigid and resistant hair shaft through their extensive disulfide bond cross-linking with abundant cysteine residues of hair keratins. The matrix proteins include the high-sulfur and high-glycine-tyrosine keratins. This chain is Keratin-associated protein 13-4 (KRTAP13-4), found in Homo sapiens (Human).